Here is a 60-residue protein sequence, read N- to C-terminus: Metallothionein A (60 aa).

Residues 1-28 are beta; sequence MDPCECSKSGTCNCGGSCTCTNCSCKSC. A divalent metal cation contacts are provided by Cys-4, Cys-6, Cys-12, Cys-14, Cys-18, Cys-20, Cys-23, Cys-25, Cys-28, Cys-32, Cys-33, Cys-35, Cys-36, Cys-40, Cys-43, Cys-47, Cys-49, Cys-54, Cys-58, and Cys-59. The alpha stretch occupies residues 29–60; sequence KKSCCPCCPSGCTKCASGCVCKGKTCDTSCCQ.

This sequence belongs to the metallothionein superfamily. Type 1 family.

Its function is as follows. Metallothioneins have a high content of cysteine residues that bind various heavy metals. In Chionodraco rastrospinosus (Ocellated icefish), this protein is Metallothionein A (mta).